The chain runs to 337 residues: Hairy/enhancer-of-split related with YRPW motif protein 2 (337 aa).

The interval 1–52 is disordered; the sequence is MKRPCEETTSESDMDETIDVGSENNYSGQSTSSVIRLNSPTTTSQIMARKKR. Positions 8-18 are enriched in acidic residues; sequence TTSESDMDETI. The span at 22 to 46 shows a compositional bias: polar residues; that stretch reads SENNYSGQSTSSVIRLNSPTTTSQI. The interval 47 to 116 is transcriptional repression and interaction with NCOR1 and SIN3A; sequence MARKKRRGII…GGKGYFDAHA (70 aa). The bHLH domain occupies 48-103; the sequence is ARKKRRGIIEKRRRDRINNSLSELRRLVPTAFEKQGSAKLEKAEILQMTVDHLKML. The Orange domain occupies 122-157; that stretch reads MSIGFRECLTEVARYLSSVEGLDSSDPLRVRLVSHL. Residues 307–325 are compositionally biased toward polar residues; that stretch reads LSVSATSSPQQTSSGTNNK. A disordered region spans residues 307–337; it reads LSVSATSSPQQTSSGTNNKPYRPWGTEVGAF. Positions 327-330 match the YRPW motif motif; that stretch reads YRPW.

This sequence belongs to the HEY family. As to quaternary structure, may self-associate. Interacts with GATA4, HES1 and HEYL. Interacts with HDAC1, NCOR1 and SIN3A. Interacts with ARNT and GATA6.

The protein resides in the nucleus. Functionally, downstream effector of Notch signaling which may be required for cardiovascular development. Transcriptional repressor which binds preferentially to the canonical E box sequence 5'-CACGTG-3'. Represses transcription by the cardiac transcriptional activators GATA4 and GATA6. This Homo sapiens (Human) protein is Hairy/enhancer-of-split related with YRPW motif protein 2 (HEY2).